The following is a 491-amino-acid chain: Dipeptide and tripeptide permease B (491 aa).

The Cytoplasmic portion of the chain corresponds to 1–26 (MNNTAPGLLHQPKPFFMIFFVELWER). The helical transmembrane segment at 27-47 (FGYYGVQGILAVFFVKQLGFS) threads the bilayer. Over 48-51 (QEQA) the chain is Periplasmic. Residues 52–72 (FITFGAFAALVYGLISIGGYV) form a helical membrane-spanning segment. The Cytoplasmic portion of the chain corresponds to 73–81 (GDHLLGTKR). The helical transmembrane segment at 82–102 (TMVLGAIVLALGYFMTGMSLL) threads the bilayer. The Periplasmic segment spans residues 103–105 (KPE). Residues 106 to 126 (MIFIALGTIAVGNGLFKANPA) form a helical membrane-spanning segment. The Cytoplasmic portion of the chain corresponds to 127–145 (SLLSKCYPPKDPRLDGAFT). Residues 146 to 166 (LFYMSINIGSLLSLSLAPIIA) form a helical membrane-spanning segment. The Periplasmic segment spans residues 167–171 (ERFGY). A helical membrane pass occupies residues 172 to 192 (AVTYNLCGLGLIIALLVYFAC). Residues 193-210 (RGMVRSIGSAPDHQPLNY) lie on the Cytoplasmic side of the membrane. Residues 211 to 231 (GKLLLVLAGAVVMIFLCAWLM) traverse the membrane as a helical segment. A topological domain (periplasmic) is located at residue His-232. The chain crosses the membrane as a helical span at residues 233 to 253 (NVGVANIVLIAVSAVVLYFFF). The Cytoplasmic portion of the chain corresponds to 254–266 (REAFKQDKTGRNR). Residues 267–287 (MFVAFILMIEAVLFYILYAQM) traverse the membrane as a helical segment. The Periplasmic segment spans residues 288–312 (PTSLNFFAINNVRHELLGFAINPVS). The helical transmembrane segment at 313–335 (FQALNPFWVVVASPILASIYTRL) threads the bilayer. At 336–349 (GSRGRDMTMPTKFT) the chain is on the cytoplasmic side. Residues 350–370 (LGMLLCSLGFLTAAAAGMWFA) traverse the membrane as a helical segment. Topologically, residues 371 to 378 (DAQGLTSP) are periplasmic. The helical transmembrane segment at 379–399 (WFVVLVYLFQSLGELMISALG) threads the bilayer. The Cytoplasmic segment spans residues 400–423 (LAMVAALVPQYLMGFILGMWFLTQ). The chain crosses the membrane as a helical span at residues 424–444 (AAAFLLGGYVATFTAVPAGIH). Residues 445 to 454 (DPLQTLPIYT) lie on the Periplasmic side of the membrane. A helical membrane pass occupies residues 455-475 (GVFGKIGIATLIVTLVMAAMV). At 476 to 491 (PWLNRMMNTPADGQKA) the chain is on the cytoplasmic side.

It belongs to the major facilitator superfamily. Proton-dependent oligopeptide transporter (POT/PTR) (TC 2.A.17) family. DtpB subfamily.

The protein localises to the cell inner membrane. In terms of biological role, proton-dependent permease that transports di- and tripeptides. This is Dipeptide and tripeptide permease B from Edwardsiella piscicida.